Reading from the N-terminus, the 310-residue chain is Methionyl-tRNA formyltransferase (310 aa).

Residue 109–112 coordinates (6S)-5,6,7,8-tetrahydrofolate; that stretch reads SLLP.

It belongs to the Fmt family.

It carries out the reaction L-methionyl-tRNA(fMet) + (6R)-10-formyltetrahydrofolate = N-formyl-L-methionyl-tRNA(fMet) + (6S)-5,6,7,8-tetrahydrofolate + H(+). Attaches a formyl group to the free amino group of methionyl-tRNA(fMet). The formyl group appears to play a dual role in the initiator identity of N-formylmethionyl-tRNA by promoting its recognition by IF2 and preventing the misappropriation of this tRNA by the elongation apparatus. This Pseudomonas entomophila (strain L48) protein is Methionyl-tRNA formyltransferase.